A 152-amino-acid polypeptide reads, in one-letter code: Deoxyuridine 5'-triphosphate nucleotidohydrolase (152 aa).

Residues 71 to 73 (RSG), N84, 88 to 90 (LID), and M98 each bind substrate.

The protein belongs to the dUTPase family. Requires Mg(2+) as cofactor.

The catalysed reaction is dUTP + H2O = dUMP + diphosphate + H(+). Its pathway is pyrimidine metabolism; dUMP biosynthesis; dUMP from dCTP (dUTP route): step 2/2. Its function is as follows. This enzyme is involved in nucleotide metabolism: it produces dUMP, the immediate precursor of thymidine nucleotides and it decreases the intracellular concentration of dUTP so that uracil cannot be incorporated into DNA. This chain is Deoxyuridine 5'-triphosphate nucleotidohydrolase, found in Shewanella sediminis (strain HAW-EB3).